Here is a 69-residue protein sequence, read N- to C-terminus: Probable Sec-independent protein translocase protein TatE (69 aa).

A helical transmembrane segment spans residues 1-21 (MEGISIAKLLVIGALIVLLFG). The tract at residues 45–69 (DDQPAAKSSAQDEHPAAISETRPKE) is disordered. Residues 54-69 (AQDEHPAAISETRPKE) show a composition bias toward basic and acidic residues.

This sequence belongs to the TatA/E family. TatE subfamily.

Its subcellular location is the cell inner membrane. Its function is as follows. Part of the twin-arginine translocation (Tat) system that transports large folded proteins containing a characteristic twin-arginine motif in their signal peptide across membranes. TatE shares overlapping functions with TatA. The polypeptide is Probable Sec-independent protein translocase protein TatE (Dickeya chrysanthemi (strain Ech1591) (Dickeya zeae (strain Ech1591))).